Consider the following 507-residue polypeptide: Interleukin-17 receptor E-like protein (507 aa).

The first 21 residues, 1 to 21 (MLAGQALAFLGLTWGTFQSLA), serve as a signal peptide directing secretion.

It localises to the secreted. The protein is Interleukin-17 receptor E-like protein of Homo sapiens (Human).